The following is a 446-amino-acid chain: Histidine--tRNA ligase (446 aa).

It belongs to the class-II aminoacyl-tRNA synthetase family. Homodimer.

The protein localises to the cytoplasm. The catalysed reaction is tRNA(His) + L-histidine + ATP = L-histidyl-tRNA(His) + AMP + diphosphate + H(+). The chain is Histidine--tRNA ligase from Burkholderia pseudomallei (strain 668).